Reading from the N-terminus, the 305-residue chain is Porphobilinogen deaminase (305 aa).

C241 carries the S-(dipyrrolylmethanemethyl)cysteine modification.

This sequence belongs to the HMBS family. Monomer. Dipyrromethane serves as cofactor.

The enzyme catalyses 4 porphobilinogen + H2O = hydroxymethylbilane + 4 NH4(+). The protein operates within porphyrin-containing compound metabolism; protoporphyrin-IX biosynthesis; coproporphyrinogen-III from 5-aminolevulinate: step 2/4. Tetrapolymerization of the monopyrrole PBG into the hydroxymethylbilane pre-uroporphyrinogen in several discrete steps. The polypeptide is Porphobilinogen deaminase (Exiguobacterium sp. (strain ATCC BAA-1283 / AT1b)).